The sequence spans 294 residues: Putative lipid kinase SP_1045 (294 aa).

Residues 1–131 (MKKAMVIINP…IDIGKANDNY (131 aa)) form the DAGKc domain. ATP-binding positions include 9 to 13 (NPTSG), threonine 40, 66 to 72 (GDGTVNE), and threonine 93. Residues aspartate 212 and tyrosine 214 each contribute to the Mg(2+) site. The active-site Proton acceptor is aspartate 269.

Belongs to the diacylglycerol/lipid kinase family. The cofactor is Mg(2+).

Its function is as follows. May catalyze the ATP-dependent phosphorylation of lipids other than diacylglycerol (DAG). In fact, is not able to exhibit diacylglycerol kinase activity in vitro. In Streptococcus pneumoniae serotype 4 (strain ATCC BAA-334 / TIGR4), this protein is Putative lipid kinase SP_1045.